The chain runs to 496 residues: N-acetylmuramoyl-L-alanine amidase LytC (496 aa).

The signal sequence occupies residues 1-24; the sequence is MRSYIKVLTMCFLGLILFVPTALA. 3 tandem repeats follow at residues 30-128, 129-222, and 223-318. Positions 30-318 are 3 X tandem repeats; the sequence is RVGGSNRYGT…VANQLKNPVV (289 aa). Residues 322 to 490 enclose the MurNAc-LAA domain; that stretch reads IFIDPGHGDQ…DKAAQAIHDG (169 aa).

It belongs to the N-acetylmuramoyl-L-alanine amidase 3 family.

The protein localises to the secreted. The protein resides in the cell wall. The enzyme catalyses Hydrolyzes the link between N-acetylmuramoyl residues and L-amino acid residues in certain cell-wall glycopeptides.. Functionally, autolysins are cell wall hydrolases involved in some important biological processes such as cell separation, cell-wall turnover, competence for genetic transformation, formation of the flagella - in particular of its basal body - and sporulation. Has a high affinity for teichoic acid-endowed peptidoglycan. LytC is required for efficient swarming motility but not at the level of cell separation or flagellum biosynthesis. Rather, LytC appears to be important for proper flagellar function. This is N-acetylmuramoyl-L-alanine amidase LytC (lytC) from Bacillus subtilis (strain 168).